Consider the following 332-residue polypeptide: Tumor necrosis factor receptor superfamily member 6 (332 aa).

An N-terminal signal peptide occupies residues 1–16 (MSGIWVLLSLVFTCIA). At 17–175 (GPLSKGDDAQ…VFQSAGSRSN (159 aa)) the chain is on the extracellular side. N38 carries an N-linked (GlcNAc...) asparagine glycan. TNFR-Cys repeat units lie at residues 45–81 (ECPE…PQCV), 82–125 (PCSE…NTKC), and 126–164 (RCKP…TKCR). Intrachain disulfides connect C46-C57, C58-C71, C61-C80, C83-C99, C102-C117, C105-C125, C127-C141, C144-C155, and C147-C163. The N-linked (GlcNAc...) asparagine glycan is linked to N116. The chain crosses the membrane as a helical span at residues 176–192 (LHWLWALLILIPVPALV). Over 193–332 (YREVKRRCRR…NSQNENESLT (140 aa)) the chain is Cytoplasmic. C200 carries the S-palmitoyl cysteine lipid modification. An interaction with HIPK3 region spans residues 210 to 314 (PITSNAEEVP…DKINDIVQKD (105 aa)). T212 is subject to Phosphothreonine. Positions 227-251 (GKYITRIAEQMKITEVKDFVRKNGI) are interaction with CALM. Residues 227–311 (GKYITRIAEQ…ALADKINDIV (85 aa)) enclose the Death domain.

In terms of assembly, component of the death-induced signaling complex (DISC) composed of cell surface receptor FAS/CD95, adapter protein FADD and the CASP8 protease; recruitment of CASP8 to the complex is required for processing of CASP8 into the p18 and p10 subunits. Interacts directly (via DED domain) with NOL3 (via CARD domain); inhibits death-inducing signaling complex (DISC) assembly by inhibiting the increase in FAS-FADD binding induced by FAS activation. Binds DAXX. Interacts with HIPK3. Part of a complex containing HIPK3 and FADD. Binds RIPK1 and FAIM2. Interacts with BABAM2 and FEM1B. Interacts with CALM. In the absence of stimulation, interacts with BIRC2, DDX3X and GSK3B. The interaction with BIRC2 and DDX3X is further enhanced upon receptor stimulation and accompanied by DDX3X and BIRC2 cleavage. Palmitoylated. Palmitoylation by ZDHHC7 prevents the lysosomal degradation of FAS regulating its expression at the plasma membrane.

Its subcellular location is the cell membrane. It is found in the membrane raft. Receptor for TNFSF6/FASLG. The adapter molecule FADD recruits caspase CASP8 to the activated receptor. The resulting death-inducing signaling complex (DISC) performs CASP8 proteolytic activation which initiates the subsequent cascade of caspases (aspartate-specific cysteine proteases) mediating apoptosis. FAS-mediated apoptosis may have a role in the induction of peripheral tolerance, in the antigen-stimulated suicide of mature T-cells, or both. This chain is Tumor necrosis factor receptor superfamily member 6 (FAS), found in Sus scrofa (Pig).